Here is a 20-residue protein sequence, read N- to C-terminus: Magnificalysin I (20 aa).

The plays an important role in the hemolytic activity stretch occupies residues 1–10 (ALAGTIIAGA). The N-terminal region stretch occupies residues 9-20 (GASLTFKILDEV).

This sequence belongs to the actinoporin family. Sea anemone subfamily. As to quaternary structure, octamer or nonamer in membranes. Monomer in the soluble state.

The protein localises to the secreted. It is found in the nematocyst. Its subcellular location is the target cell membrane. Pore-forming protein that forms cations-selective hydrophilic pores of around 1 nm and causes cytolysis. Pore formation is a multi-step process that involves specific recognition of membrane sphingomyelin (but neither cholesterol nor phosphatidylcholine) using aromatic rich region and adjacent phosphocholine (POC) binding site, firm binding to the membrane (mainly driven by hydrophobic interactions) accompanied by the transfer of the N-terminal region to the lipid-water interface and finally pore formation after oligomerization of monomers. The chain is Magnificalysin I from Heteractis magnifica (Magnificent sea anemone).